Consider the following 486-residue polypeptide: Cardiolipin synthase A (486 aa).

Transmembrane regions (helical) follow at residues 3 to 23 (TFYT…IAGV) and 38 to 58 (MAWL…YLSF). 2 PLD phosphodiesterase domains span residues 219–246 (MDLR…VDPR) and 399–426 (EGGL…DMRS). Active-site residues include His224, Lys226, Asp231, His404, Lys406, and Asp411.

Belongs to the phospholipase D family. Cardiolipin synthase subfamily. ClsA sub-subfamily.

It localises to the cell inner membrane. It carries out the reaction 2 a 1,2-diacyl-sn-glycero-3-phospho-(1'-sn-glycerol) = a cardiolipin + glycerol. Functionally, catalyzes the reversible phosphatidyl group transfer from one phosphatidylglycerol molecule to another to form cardiolipin (CL) (diphosphatidylglycerol) and glycerol. The protein is Cardiolipin synthase A of Escherichia fergusonii (strain ATCC 35469 / DSM 13698 / CCUG 18766 / IAM 14443 / JCM 21226 / LMG 7866 / NBRC 102419 / NCTC 12128 / CDC 0568-73).